Reading from the N-terminus, the 187-residue chain is UPF0301 protein PBPRA3139 (187 aa).

This sequence belongs to the UPF0301 (AlgH) family.

This chain is UPF0301 protein PBPRA3139, found in Photobacterium profundum (strain SS9).